Here is a 296-residue protein sequence, read N- to C-terminus: Vacuolar histidine transporter YPQ3 (296 aa).

Over 1–12 (MKLIPIILNAKN) the chain is Vacuolar. Residues 10-76 (AKNLSGMAGS…QNLLPTMIIL (67 aa)) enclose the PQ-loop 1 domain. Residues 13-33 (LSGMAGSISICCWIVVFVPQI) traverse the membrane as a helical segment. The Cytoplasmic segment spans residues 34 to 44 (YENFRRQSAEG). The chain crosses the membrane as a helical span at residues 45–65 (LSLLFIVLWLLGDIFNVMGAM). Residues 66 to 68 (MQN) are Vacuolar-facing. The chain crosses the membrane as a helical span at residues 69–89 (LLPTMIILAAYYTLADLILLI). At 90 to 163 (QCMWYDKEKK…RTIVVKEREN (74 aa)) the chain is on the cytoplasmic side. Residues 164–184 (FFNDFLIVSGVLIAGILSWYI) traverse the membrane as a helical segment. At 185–199 (SYCSGLDNGIPKKKP) the chain is on the vacuolar side. The chain crosses the membrane as a helical span at residues 200–220 (AFEQINLPAQILGYLSAILYL). The 63-residue stretch at 208–270 (AQILGYLSAI…ASWLIGSAGT (63 aa)) folds into the PQ-loop 2 domain. Residues 221-238 (GSRIPQIVLNFKRKSCEG) are Cytoplasmic-facing. The helical transmembrane segment at 239-259 (VSFLFFLFACLGNTSFIISVL) threads the bilayer. Residues 260 to 262 (SAS) are Vacuolar-facing. A helical transmembrane segment spans residues 263–283 (WLIGSAGTLLMDFTVFIQFFL). Residues 284-296 (YAKPKYEKILIDN) are Cytoplasmic-facing.

The protein belongs to the laat-1 family.

It localises to the vacuole membrane. It is found in the mitochondrion membrane. Its function is as follows. Amino acid transporter that moves histidine into the vacuole. May also contribute to low affinity arginine import into the vacuole. May function as an amino acid/proton antiporter. The chain is Vacuolar histidine transporter YPQ3 from Saccharomyces cerevisiae (strain ATCC 204508 / S288c) (Baker's yeast).